The chain runs to 245 residues: Ribonuclease PH (245 aa).

Residues Arg-86 and 124–126 (GTR) contribute to the phosphate site.

This sequence belongs to the RNase PH family. Homohexameric ring arranged as a trimer of dimers.

It carries out the reaction tRNA(n+1) + phosphate = tRNA(n) + a ribonucleoside 5'-diphosphate. Phosphorolytic 3'-5' exoribonuclease that plays an important role in tRNA 3'-end maturation. Removes nucleotide residues following the 3'-CCA terminus of tRNAs; can also add nucleotides to the ends of RNA molecules by using nucleoside diphosphates as substrates, but this may not be physiologically important. Probably plays a role in initiation of 16S rRNA degradation (leading to ribosome degradation) during starvation. The protein is Ribonuclease PH of Bacillus cereus (strain ATCC 10987 / NRS 248).